Consider the following 474-residue polypeptide: Lactococcin A secretion protein LcnD (474 aa).

Topologically, residues 1 to 21 (MFDKKLLESSELYDKRYRNFS) are cytoplasmic. A helical membrane pass occupies residues 22–44 (TLIILPLFILLVGGVIFTFFAHK). At 45-474 (ELTVISTGSI…LDKIMGRGNQ (430 aa)) the chain is on the extracellular side.

This sequence belongs to the membrane fusion protein (MFP) (TC 8.A.1) family.

Its subcellular location is the cell membrane. Involved in the secretion of lactococcin A. This Lactococcus lactis subsp. cremoris (Streptococcus cremoris) protein is Lactococcin A secretion protein LcnD (lcnD).